An 868-amino-acid chain; its full sequence is Leucine--tRNA ligase (868 aa).

Residues 42–52 carry the 'HIGH' region motif; that stretch reads PYPSGKLHMGH. A 'KMSKS' region motif is present at residues 624–628; the sequence is TMSKS. An ATP-binding site is contributed by K627.

This sequence belongs to the class-I aminoacyl-tRNA synthetase family.

It is found in the cytoplasm. It catalyses the reaction tRNA(Leu) + L-leucine + ATP = L-leucyl-tRNA(Leu) + AMP + diphosphate. This is Leucine--tRNA ligase from Nitrosomonas eutropha (strain DSM 101675 / C91 / Nm57).